The chain runs to 310 residues: Isoflavone reductase homolog A622-like (310 aa).

NADP(+) contacts are provided by residues 13–19 (GGTGYIG), Arg-38, and Lys-47. Residue Lys-135 is the Proton acceptor of the active site. Arg-139 lines the NADP(+) pocket.

The protein belongs to the NmrA-type oxidoreductase family. Isoflavone reductase subfamily. Monomer. In terms of tissue distribution, expressed in roots.

It localises to the cytoplasm. Its pathway is alkaloid biosynthesis; nicotine biosynthesis. Involved in the biosynthesis of pyridine alkaloid natural products, leading mainly to the production of anabasine, anatabine, nicotine and nornicotine, effective deterrents against herbivores with antiparasitic and pesticide properties (neurotoxins); nornicotine serves as the precursor in the synthesis of the carcinogen compound N'-nitrosonornicotine (NNN). Reductase that may be involved in a late step of tobacco alkaloid biosynthesis. Maybe involved in either the formation of a nicotinic acid-derived precursor or the final condensation reaction of tobacco alkaloids. In Nicotiana tabacum (Common tobacco), this protein is Isoflavone reductase homolog A622-like.